Reading from the N-terminus, the 342-residue chain is Isopentenyl-diphosphate delta-isomerase (342 aa).

11 to 12 is a substrate binding site; the sequence is RK. FMN contacts are provided by residues Ser68, 69–71, Ser99, and Asn127; that span reads SMT. 99–101 is a substrate binding site; it reads SMR. Residue Gln162 participates in substrate binding. Glu163 provides a ligand contact to Mg(2+). FMN contacts are provided by residues Lys194, Thr224, 274-276, and 295-296; these read GLK and AG.

This sequence belongs to the IPP isomerase type 2 family. Homooctamer. Dimer of tetramers. Requires FMN as cofactor. It depends on NADPH as a cofactor. Mg(2+) serves as cofactor.

Its subcellular location is the cytoplasm. It catalyses the reaction isopentenyl diphosphate = dimethylallyl diphosphate. In terms of biological role, involved in the biosynthesis of isoprenoids. Catalyzes the 1,3-allylic rearrangement of the homoallylic substrate isopentenyl (IPP) to its allylic isomer, dimethylallyl diphosphate (DMAPP). This chain is Isopentenyl-diphosphate delta-isomerase, found in Rickettsia akari (strain Hartford).